The sequence spans 334 residues: Cathepsin K (334 aa).

The first 19 residues, 1 to 19 (MLRLHWLALLVLLLPMAAA), serve as a signal peptide directing secretion. A propeptide spans 20–119 (QLRPEPELDA…TLYVPDWSSR (100 aa)) (activation peptide). Residue Asn-108 is glycosylated (N-linked (GlcNAc...) asparagine). Cystine bridges form between Cys-141–Cys-182, Cys-175–Cys-215, and Cys-274–Cys-323. Cys-144 is a catalytic residue. Catalysis depends on residues His-281 and Asn-301.

This sequence belongs to the peptidase C1 family.

It catalyses the reaction Broad proteolytic activity. With small-molecule substrates and inhibitors, the major determinant of specificity is P2, which is preferably Leu, Met &gt; Phe, and not Arg.. Functionally, closely involved in osteoclastic bone resorption and may participate partially in the disorder of bone remodeling. Displays potent endoprotease activity against fibrinogen at acid pH. May play an important role in extracellular matrix degradation. The sequence is that of Cathepsin K (CTSK) from Gallus gallus (Chicken).